A 297-amino-acid polypeptide reads, in one-letter code: MKIGLIGLGKMGINIGKQFIDRNHQVVGYDVNQAAVDELKAYGAEGTTNLKEFISLLHPPRILWVMVPHGIVDAVLRDVSPLLSKGDMIIEAGNSHYKESIRRYNQMKEAGIHYLDAGTSGGMEGARHGACFMVGGDHEAWEIVEPLFRDTAVENGYLYAGEAGSGHFLKMIHNGIEYGMMAAIGEGFEVLENSQFDFDYEKVARVWNHGSVIRSWLMGLTERAFAKDAKLDQIKGIMHSSGEGKWTVETALDLQTATPVIAMSLMMRYRSLTDDTFTGKVVAALRNEFGGHATEKK.

NAD(+) is bound by residues 7–12 (GLGKMG) and Asn94. Substrate contacts are provided by residues Asn94 and 120 to 122 (SGG). The active-site Proton acceptor is the Lys170. Position 173-174 (173-174 (HN)) interacts with substrate. Glu177 serves as the catalytic Proton donor. Residues Tyr178 and Arg268 each contribute to the substrate site.

This sequence belongs to the 6-phosphogluconate dehydrogenase family.

In terms of biological role, may act as NAD-dependent 6-P-gluconate dehydrogenase. This Bacillus subtilis (strain 168) protein is Putative 6-phosphogluconate dehydrogenase YqeC (yqeC).